The chain runs to 111 residues: Ig kappa chain V-III region CBPC 101 (111 aa).

The interval 1–23 (DIVLTQSPASLAVSLGQRATISC) is framework-1. The cysteines at positions 23 and 92 are disulfide-linked. The complementarity-determining-1 stretch occupies residues 24 to 38 (KASQSVDYTGESYMN). A framework-2 region spans residues 39 to 53 (WYQQNPGQSPKLLIY). Positions 54 to 60 (AASNLES) are complementarity-determining-2. The interval 61–92 (GIPARFSGSGSGTDFTLNIHPVEEEDAATYYC) is framework-3. The complementarity-determining-3 stretch occupies residues 93-101 (QQSNEDPYT). Residues 102-111 (FGGGTKLEIK) form a framework-4 region.

This chain is Ig kappa chain V-III region CBPC 101, found in Mus musculus (Mouse).